Consider the following 272-residue polypeptide: uncharacterized protein (272 aa).

A disordered region spans residues 193–250 (AFLLPNNSKGVEKSEENEDGVTDNDSSNVNSSTNESPNPTDINVCSNDDATDNTENNL). The span at 215 to 233 (DNDSSNVNSSTNESPNPTD) shows a compositional bias: low complexity. A compositionally biased stretch (polar residues) spans 235 to 248 (NVCSNDDATDNTEN).

The protein belongs to the pal1 family.

The protein resides in the cytoplasm. The protein localises to the nucleus. This is an uncharacterized protein from Schizosaccharomyces pombe (strain 972 / ATCC 24843) (Fission yeast).